Consider the following 610-residue polypeptide: Chaperone protein DnaK (610 aa).

T173 carries the post-translational modification Phosphothreonine; by autocatalysis. Residues Q579 to N592 show a composition bias toward low complexity. The tract at residues Q579 to K610 is disordered. Residues A599–K610 are compositionally biased toward basic and acidic residues.

This sequence belongs to the heat shock protein 70 family.

Functionally, acts as a chaperone. The protein is Chaperone protein DnaK of Staphylococcus aureus (strain bovine RF122 / ET3-1).